A 503-amino-acid chain; its full sequence is Maturase K (503 aa).

Belongs to the intron maturase 2 family. MatK subfamily.

The protein localises to the plastid. Its subcellular location is the chloroplast. In terms of biological role, usually encoded in the trnK tRNA gene intron. Probably assists in splicing its own and other chloroplast group II introns. The chain is Maturase K from Eucalyptus globulus (Tasmanian blue gum).